A 518-amino-acid polypeptide reads, in one-letter code: Beta-secretase 2 (518 aa).

An N-terminal signal peptide occupies residues 1–20 (MGALARALLLPLLAQWLLRA). Positions 21-62 (APELAPAPFTLPLRVAAATNRVVAPTPGPGTPAERHADGLAL) are excised as a propeptide. At 21–473 (APELAPAPFT…SEPILWIVSY (453 aa)) the chain is on the extracellular side. Residues 92–429 (YYLEMLIGTP…DRAQKRVGFA (338 aa)) enclose the Peptidase A1 domain. Residue D110 is part of the active site. N-linked (GlcNAc...) asparagine glycosylation occurs at N170. Intrachain disulfides connect C233/C433, C292/C457, and C344/C393. Residue D303 is part of the active site. N366 carries an N-linked (GlcNAc...) asparagine glycan. A helical transmembrane segment spans residues 474-494 (ALMSVCGAILLVLIVLLLLPF). Topologically, residues 495–518 (RCQRRPRDPEVVNDESSLVRHRWK) are cytoplasmic.

It belongs to the peptidase A1 family. As to quaternary structure, monomer. Interacts with RTN3 and RTN4. Undergoes autoproteolytic cleavage. In terms of processing, glycosylated. In terms of tissue distribution, brain. Present in neurons within the hippocampus, frontal cortex and temporal cortex (at protein level). Expressed at low levels in most peripheral tissues and at higher levels in colon, kidney, pancreas, placenta, prostate, stomach and trachea. Expressed at low levels in the brain. Found in spinal cord, medulla oblongata, substantia nigra and locus coruleus. Expressed in the ductal epithelium of both normal and malignant prostate.

It localises to the cell membrane. The protein localises to the golgi apparatus. Its subcellular location is the endoplasmic reticulum. The protein resides in the endosome. It is found in the melanosome. It carries out the reaction Broad endopeptidase specificity. Cleaves Glu-Val-Asn-Leu-|-Asp-Ala-Glu-Phe in the Swedish variant of Alzheimer's amyloid precursor protein.. In terms of biological role, responsible for the proteolytic processing of the amyloid precursor protein (APP). Cleaves APP, between residues 690 and 691, leading to the generation and extracellular release of beta-cleaved soluble APP, and a corresponding cell-associated C-terminal fragment which is later released by gamma-secretase. It has also been shown that it can cleave APP between residues 671 and 672. Involved in the proteolytic shedding of PMEL at early stages of melanosome biogenesis. Cleaves PMEL within the M-beta fragment to release the amyloidogenic PMEL luminal fragment containing M-alpha and a small portion of M-beta N-terminus. This is a prerequisite step for subsequent processing and assembly of PMEL fibrils into amyloid sheets. Responsible also for the proteolytic processing of CLTRN in pancreatic beta cells. This is Beta-secretase 2 (BACE2) from Homo sapiens (Human).